Here is a 330-residue protein sequence, read N- to C-terminus: Heat-inducible transcription repressor HrcA (330 aa).

Belongs to the HrcA family.

Negative regulator of class I heat shock genes (grpE-dnaK-dnaJ and groELS operons). Prevents heat-shock induction of these operons. In Synechococcus sp. (strain RCC307), this protein is Heat-inducible transcription repressor HrcA.